Here is a 263-residue protein sequence, read N- to C-terminus: (2Z,6E)-farnesyl diphosphate synthase (263 aa).

Asp40 is a catalytic residue. Asp40 provides a ligand contact to Mg(2+). Residues 41 to 44 (GNRR), Trp45, and 86 to 88 (STE) contribute to the substrate site. Catalysis depends on Asn89, which acts as the Proton acceptor. Substrate contacts are provided by residues Arg92, Arg212, and 218–220 (RLS). Glu231 contacts Mg(2+).

The protein belongs to the UPP synthase family. Z-FPP synthase subfamily. Homodimer. Requires Mg(2+) as cofactor.

Its subcellular location is the cell membrane. It catalyses the reaction isopentenyl diphosphate + (2E)-geranyl diphosphate = (2Z,6E)-farnesyl diphosphate + diphosphate. In terms of biological role, catalyzes the condensation of only one isopentenyl pyrophosphate (IPP) unit in the cis configuration to E-geranyl diphosphate (E-GPP) generating the 15 carbon product (2Z,6E)-farnesyl diphosphate (Z-FPP or EZ-FPP). Z-FPP is the precursor of decaprenyl diphosphate, which has a central role in the biosynthesis of the mycobacterial cell wall. The chain is (2Z,6E)-farnesyl diphosphate synthase (uppS) from Mycolicibacterium smegmatis (strain ATCC 700084 / mc(2)155) (Mycobacterium smegmatis).